A 113-amino-acid chain; its full sequence is Cell cycle protein GpsB (113 aa).

The stretch at 36 to 68 forms a coiled coil; it reads LDMVIKDYSTFTQEIEALQAENIRLVQELDNAP.

Belongs to the GpsB family. Forms polymers through the coiled coil domains. Interacts with PBP1, MreC and EzrA.

Its subcellular location is the cytoplasm. Divisome component that associates with the complex late in its assembly, after the Z-ring is formed, and is dependent on DivIC and PBP2B for its recruitment to the divisome. Together with EzrA, is a key component of the system that regulates PBP1 localization during cell cycle progression. Its main role could be the removal of PBP1 from the cell pole after pole maturation is completed. Also contributes to the recruitment of PBP1 to the division complex. Not essential for septum formation. The protein is Cell cycle protein GpsB of Listeria welshimeri serovar 6b (strain ATCC 35897 / DSM 20650 / CCUG 15529 / CIP 8149 / NCTC 11857 / SLCC 5334 / V8).